We begin with the raw amino-acid sequence, 244 residues long: High affinity immunoglobulin epsilon receptor subunit beta (244 aa).

The Cytoplasmic portion of the chain corresponds to 1-59; it reads MDTESNRRANLALPQEPSSVPAFEVLEISPQEVSSGRLLKSASSPPLHTWLTVLKKEQE. Residues 60–79 form a helical membrane-spanning segment; that stretch reads FLGVTQILTAMICLCFGTVV. The Extracellular portion of the chain corresponds to 80-97; sequence CSVLDISHIEGDIFSSFK. Residues 98–117 form a helical membrane-spanning segment; the sequence is AGYPFWGAIFFSISGMLSII. Topologically, residues 118-130 are cytoplasmic; the sequence is SERRNATYLVRGS. A helical transmembrane segment spans residues 131 to 150; that stretch reads LGANTASSIAGGTGITILII. The Extracellular portion of the chain corresponds to 151–180; the sequence is NLKKSLAYIHIHSCQKFFETKCFMASFSTE. The chain crosses the membrane as a helical span at residues 181–200; it reads IVVMMLFLTILGLGSAVSLT. The Cytoplasmic segment spans residues 201 to 244; the sequence is ICGAGEELKGNKVPEDRVYEELNIYSATYSELEDPGEMSPPIDL. A phosphotyrosine mark is found at tyrosine 219 and tyrosine 225. Serine 226 carries the post-translational modification Phosphoserine. The residue at position 229 (tyrosine 229) is a Phosphotyrosine.

Belongs to the MS4A family. Tetramer of an alpha chain, a beta chain, and two disulfide linked gamma chains. Binds LILRB1. Interacts with FGR, FES/FPS and LYN. Phosphorylated on tyrosine residues by LYN. As to expression, found on the surface of mast cells and basophils.

It is found in the membrane. Functionally, high affinity receptor that binds to the Fc region of immunoglobulins epsilon. Aggregation of FCER1 by multivalent antigens is required for the full mast cell response, including the release of preformed mediators (such as histamine) by degranulation and de novo production of lipid mediators and cytokines. Also mediates the secretion of important lymphokines. Binding of allergen to receptor-bound IgE leads to cell activation and the release of mediators responsible for the manifestations of allergy. The polypeptide is High affinity immunoglobulin epsilon receptor subunit beta (MS4A2) (Homo sapiens (Human)).